Consider the following 125-residue polypeptide: Interleukin-6 (125 aa).

A disulfide bridge links Cys16 with Cys26.

This sequence belongs to the IL-6 superfamily. Component of a hexamer of two molecules each of IL6, IL6R and IL6ST; first binds to IL6R to associate with the signaling subunit IL6ST. Interacts with IL6R (via the N-terminal ectodomain); this interaction may be affected by IL6R-binding with SORL1, hence decreasing IL6 cis signaling. Interacts with SORL1 (via the N-terminal ectodomain); this interaction leads to IL6 internalization and lysosomal degradation. May form a trimeric complex with the soluble SORL1 ectodomain and soluble IL6R receptor; this interaction might stabilize circulating IL6, hence promoting IL6 trans signaling.

The protein localises to the secreted. Functionally, cytokine with a wide variety of biological functions in immunity, tissue regeneration, and metabolism. Binds to IL6R, then the complex associates to the signaling subunit IL6ST/gp130 to trigger the intracellular IL6-signaling pathway. The interaction with the membrane-bound IL6R and IL6ST stimulates 'classic signaling', whereas the binding of IL6 and soluble IL6R to IL6ST stimulates 'trans-signaling'. Alternatively, 'cluster signaling' occurs when membrane-bound IL6:IL6R complexes on transmitter cells activate IL6ST receptors on neighboring receiver cells. IL6 is a potent inducer of the acute phase response. Rapid production of IL6 contributes to host defense during infection and tissue injury, but excessive IL6 synthesis is involved in disease pathology. In the innate immune response, is synthesized by myeloid cells, such as macrophages and dendritic cells, upon recognition of pathogens through toll-like receptors (TLRs) at the site of infection or tissue injury. In the adaptive immune response, is required for the differentiation of B cells into immunoglobulin-secreting cells. Plays a major role in the differentiation of CD4(+) T cell subsets. Essential factor for the development of T follicular helper (Tfh) cells that are required for the induction of germinal-center formation. Required to drive naive CD4(+) T cells to the Th17 lineage. Also required for proliferation of myeloma cells and the survival of plasmablast cells. In terms of biological role, acts as an essential factor in bone homeostasis and on vessels directly or indirectly by induction of VEGF, resulting in increased angiogenesis activity and vascular permeability. Induces, through 'trans-signaling' and synergistically with IL1B and TNF, the production of VEGF. Involved in metabolic controls, is discharged into the bloodstream after muscle contraction increasing lipolysis and improving insulin resistance. 'Trans-signaling' in central nervous system also regulates energy and glucose homeostasis. Mediates, through GLP-1, crosstalk between insulin-sensitive tissues, intestinal L cells and pancreatic islets to adapt to changes in insulin demand. Also acts as a myokine. Plays a protective role during liver injury, being required for maintenance of tissue regeneration. Also has a pivotal role in iron metabolism by regulating HAMP/hepcidin expression upon inflammation or bacterial infection. Through activation of IL6ST-YAP-NOTCH pathway, induces inflammation-induced epithelial regeneration. This is Interleukin-6 (IL6) from Neovison vison (American mink).